The primary structure comprises 793 residues: Cation channel sperm-associated auxiliary subunit delta (793 aa).

A signal peptide spans 1-20; it reads MLMLMLVAAVTMWLRPLVTA. At 21 to 725 the chain is on the extracellular side; the sequence is QPLCRARTVR…AFPVQLVSAG (705 aa). 7 disulfides stabilise this stretch: cysteine 24–cysteine 370, cysteine 60–cysteine 146, cysteine 145–cysteine 153, cysteine 388–cysteine 497, cysteine 511–cysteine 703, cysteine 526–cysteine 573, and cysteine 625–cysteine 653. Asparagine 128 carries N-linked (GlcNAc...) asparagine glycosylation. 5 N-linked (GlcNAc...) asparagine glycosylation sites follow: asparagine 231, asparagine 241, asparagine 473, asparagine 539, and asparagine 631. The chain crosses the membrane as a helical span at residues 726 to 747; sequence VVMVLLISSILGSVWLAYMIPR. The Cytoplasmic segment spans residues 748-793; the sequence is LLRTARGRRMTSFVAQLYGRCKTVCQFRASATARTGSKPMGRHRSS.

It belongs to the CATSPERD family. Component of the CatSper complex or CatSpermasome composed of the core pore-forming members CATSPER1, CATSPER2, CATSPER3 and CATSPER4 as well as auxiliary members CATSPERB, CATSPERG, CATSPERD, CATSPERE, CATSPERZ, C2CD6/CATSPERT, TMEM249, TMEM262 and EFCAB9. HSPA1 may be an additional auxiliary complex member. The core complex members CATSPER1, CATSPER2, CATSPER3 and CATSPER4 form a heterotetrameric channel. The auxiliary CATSPERB, CATSPERG, CATSPERD and CATSPERE subunits form a pavilion-like structure over the pore which stabilizes the complex through interactions with CATSPER4, CATSPER3, CATSPER1 and CATSPER2 respectively. TMEM262/CATSPERH interacts with CATSPERB, further stabilizing the complex. C2CD6/CATSPERT interacts at least with CATSPERD and is required for targeting the CatSper complex in the flagellar membrane.

Its subcellular location is the cell projection. It is found in the cilium. The protein resides in the flagellum membrane. In terms of biological role, auxiliary component of the CatSper complex, a complex involved in sperm cell hyperactivation. Sperm cell hyperactivation is needed for sperm motility which is essential late in the preparation of sperm for fertilization. Required for CATSPER1 stability before intraflagellar transport and/or incorporation of the CatSper complex channel into the flagellar membrane. This is Cation channel sperm-associated auxiliary subunit delta from Macaca fascicularis (Crab-eating macaque).